Consider the following 176-residue polypeptide: Tubulin polymerization-promoting protein family member 3 (176 aa).

A disordered region spans residues 132 to 151 (TGSHKERFDQTGKGKGKSGR). The span at 134 to 151 (SHKERFDQTGKGKGKSGR) shows a compositional bias: basic and acidic residues.

The protein belongs to the TPPP family.

Its subcellular location is the cytoplasm. The protein localises to the cytoskeleton. In terms of biological role, regulator of microtubule dynamic that has microtubule bundling activity. The sequence is that of Tubulin polymerization-promoting protein family member 3 (tppp3) from Xenopus laevis (African clawed frog).